The following is a 450-amino-acid chain: C4-dicarboxylate transport protein (450 aa).

8 helical membrane passes run 25–45 (VVFA…YGAA), 56–76 (LIKM…IASM), 90–110 (MAYF…VANV), 162–182 (ILQV…VGDA), 200–220 (LVNI…AFTI), 234–254 (LVLT…GAVA), 319–339 (IYMT…LTLG), and 367–387 (AATL…ILGV).

It belongs to the dicarboxylate/amino acid:cation symporter (DAACS) (TC 2.A.23) family.

The protein resides in the cell inner membrane. Responsible for the transport of dicarboxylates such as succinate, fumarate, and malate from the periplasm across the membrane. This Acidovorax sp. (strain JS42) protein is C4-dicarboxylate transport protein.